We begin with the raw amino-acid sequence, 564 residues long: Keratin, type II cytoskeletal 6C (564 aa).

Over residues 1 to 11 (MASTSTTIRSH) the composition is skewed to low complexity. Residues 1–23 (MASTSTTIRSHSSSRRGFSANSA) are disordered. A2 bears the N-acetylalanine mark. A head region spans residues 2–162 (ASTSTTIRSH…DPAIQRVRAE (161 aa)). Residue S60 is modified to Phosphoserine. The segment at 163-198 (EREQIKTLNNKFASFIDKVRFLEQQNKVLDTKWTLL) is coil 1A. Residues 163–476 (EREQIKTLNN…KLLEGEECRL (314 aa)) enclose the IF rod domain. The tract at residues 199 to 217 (QEQGTKTVRQNLEPLFEQY) is linker 1. The segment at 218 to 309 (INNLRRQLDS…ALYDAELSQM (92 aa)) is coil 1B. A linker 12 region spans residues 310–333 (QTHISDTSVVLSMDNNRNLDLDSI). The segment at 334–472 (IAEVKAQYEE…ATYRKLLEGE (139 aa)) is coil 2. Positions 473–564 (ECRLNGEGVG…SSSSRKSYKH (92 aa)) are tail.

This sequence belongs to the intermediate filament family. Heterodimer of a type I and a type II keratin. KRT6 isomers associate with KRT16 and/or KRT17. As to expression, constitutively expressed in distinct types of epithelia such as those in oral mucosa, esophagus, papillae of tongue and hair follicle outer root sheath.

The chain is Keratin, type II cytoskeletal 6C (KRT6C) from Homo sapiens (Human).